A 509-amino-acid polypeptide reads, in one-letter code: Histidine--tRNA ligase (509 aa).

This sequence belongs to the class-II aminoacyl-tRNA synthetase family. As to quaternary structure, homodimer.

Its subcellular location is the cytoplasm. The catalysed reaction is tRNA(His) + L-histidine + ATP = L-histidyl-tRNA(His) + AMP + diphosphate + H(+). This chain is Histidine--tRNA ligase, found in Rhodopseudomonas palustris (strain TIE-1).